The following is a 132-amino-acid chain: Small ribosomal subunit protein uS8 (132 aa).

This sequence belongs to the universal ribosomal protein uS8 family. In terms of assembly, part of the 30S ribosomal subunit. Contacts proteins S5 and S12.

One of the primary rRNA binding proteins, it binds directly to 16S rRNA central domain where it helps coordinate assembly of the platform of the 30S subunit. The polypeptide is Small ribosomal subunit protein uS8 (Streptococcus pyogenes serotype M1).